The following is a 25-amino-acid chain: Neuromedin-U-25 (25 aa).

Position 25 is an asparagine amide (asparagine 25).

This sequence belongs to the NmU family.

It is found in the secreted. Its function is as follows. Stimulates uterine smooth muscle contraction and causes selective vasoconstriction. This is Neuromedin-U-25 (NMU) from Oryctolagus cuniculus (Rabbit).